Reading from the N-terminus, the 344-residue chain is UDP-3-O-acylglucosamine N-acyltransferase (344 aa).

The Proton acceptor role is filled by His248.

Belongs to the transferase hexapeptide repeat family. LpxD subfamily. As to quaternary structure, homotrimer.

It catalyses the reaction a UDP-3-O-[(3R)-3-hydroxyacyl]-alpha-D-glucosamine + a (3R)-hydroxyacyl-[ACP] = a UDP-2-N,3-O-bis[(3R)-3-hydroxyacyl]-alpha-D-glucosamine + holo-[ACP] + H(+). It functions in the pathway bacterial outer membrane biogenesis; LPS lipid A biosynthesis. In terms of biological role, catalyzes the N-acylation of UDP-3-O-acylglucosamine using 3-hydroxyacyl-ACP as the acyl donor. Is involved in the biosynthesis of lipid A, a phosphorylated glycolipid that anchors the lipopolysaccharide to the outer membrane of the cell. The protein is UDP-3-O-acylglucosamine N-acyltransferase of Prochlorococcus marinus (strain MIT 9515).